We begin with the raw amino-acid sequence, 82 residues long: Turripeptide OL139 (82 aa).

The tract at residues 58 to 82 (HRTTRDTADKTHGGSQRDRFFQSIA) is disordered.

Post-translationally, contains 6 disulfide bonds. In terms of tissue distribution, expressed by the venom duct.

It localises to the secreted. In terms of biological role, acts as a neurotoxin by inhibiting an ion channel. This chain is Turripeptide OL139, found in Iotyrris olangoensis (Sea snail).